The chain runs to 446 residues: Glutamate--tRNA ligase 2 (446 aa).

The 'HIGH' region signature appears at 8–18 (PSPTGYLHIGN). Positions 239–243 (GLSKR) match the 'KMSKS' region motif. Lysine 242 serves as a coordination point for ATP.

The protein belongs to the class-I aminoacyl-tRNA synthetase family. Glutamate--tRNA ligase type 1 subfamily. As to quaternary structure, monomer.

It is found in the cytoplasm. The enzyme catalyses tRNA(Glu) + L-glutamate + ATP = L-glutamyl-tRNA(Glu) + AMP + diphosphate. Functionally, catalyzes the attachment of glutamate to tRNA(Glu) in a two-step reaction: glutamate is first activated by ATP to form Glu-AMP and then transferred to the acceptor end of tRNA(Glu). The chain is Glutamate--tRNA ligase 2 from Methylobacterium radiotolerans (strain ATCC 27329 / DSM 1819 / JCM 2831 / NBRC 15690 / NCIMB 10815 / 0-1).